Here is a 581-residue protein sequence, read N- to C-terminus: Peptidyl-prolyl cis-trans isomerase FKBP10 (581 aa).

A signal peptide spans 1–33 (MFLVGSSSHTLHRLRILPLLLLLQTLERGLGRA). 3 consecutive PPIase FKBP-type domains span residues 61 to 149 (GDFV…LDVW), 173 to 261 (SDFV…LDVH), and 285 to 373 (GDFM…IDFH). Asparagine 69, asparagine 181, asparagine 293, asparagine 309, asparagine 351, asparagine 392, and asparagine 406 each carry an N-linked (GlcNAc...) asparagine glycan. Residues 398–485 (GDFIRYHYNC…LFEVELVSRE (88 aa)) enclose the PPIase FKBP-type 4 domain. EF-hand domains lie at 496–531 (WYQD…QVNE) and 541–576 (DPDK…DQER). 10 residues coordinate Ca(2+): aspartate 509, asparagine 511, aspartate 513, glutamate 515, glutamate 520, aspartate 554, asparagine 556, aspartate 558, lysine 560, and glutamate 565. The tract at residues 533–581 (KGRLMPGQDPDKTISDMFQNQDRNQDGKITAEELKLKSDEDQERVHEEL) is disordered. The segment covering 555-581 (RNQDGKITAEELKLKSDEDQERVHEEL) has biased composition (basic and acidic residues). The Prevents secretion from ER motif lies at 578–581 (HEEL).

In terms of processing, N-glycosylated. Post-translationally, phosphorylated. As to expression, expressed in aorta, brain, heart, kidney, lung, spleen and testis. Not detected in liver.

It is found in the endoplasmic reticulum lumen. The catalysed reaction is [protein]-peptidylproline (omega=180) = [protein]-peptidylproline (omega=0). With respect to regulation, inhibited by both FK506 and rapamycin, but not by cyclosporin A. Functionally, PPIases accelerate the folding of proteins during protein synthesis. This chain is Peptidyl-prolyl cis-trans isomerase FKBP10 (Fkbp10), found in Mus musculus (Mouse).